Here is a 414-residue protein sequence, read N- to C-terminus: Probable protein phosphatase 2C 9 (414 aa).

A helical transmembrane segment spans residues 15 to 37 (TATAAVAAAVSASAAAAVSSAID). The segment at 56–95 (LQAGEDGRPGKRQRLARTASGAPRPDEDSASERPSCGRTE) is disordered. One can recognise a PPM-type phosphatase domain in the interval 99 to 410 (RYGVTAVCGR…DNVSVVVVDL (312 aa)). Positions 136 and 137 each coordinate Mn(2+). Residues 186–195 (GNRASTRSDD) are compositionally biased toward basic and acidic residues. Residues 186 to 212 (GNRASTRSDDEPACPCEQQTPSRRDHA) form a disordered region. Asp-319 provides a ligand contact to Mn(2+). The segment at 345–372 (APAARPSGVPSSAEAAETENGGAASVKG) is disordered. Residues 355 to 369 (SSAEAAETENGGAAS) are compositionally biased toward low complexity. Asp-401 lines the Mn(2+) pocket.

Belongs to the PP2C family. Mg(2+) serves as cofactor. Requires Mn(2+) as cofactor.

The protein localises to the membrane. It catalyses the reaction O-phospho-L-seryl-[protein] + H2O = L-seryl-[protein] + phosphate. The catalysed reaction is O-phospho-L-threonyl-[protein] + H2O = L-threonyl-[protein] + phosphate. The chain is Probable protein phosphatase 2C 9 from Oryza sativa subsp. japonica (Rice).